The following is a 299-amino-acid chain: ATP phosphoribosyltransferase (299 aa).

Belongs to the ATP phosphoribosyltransferase family. Long subfamily. Mg(2+) is required as a cofactor.

The protein resides in the cytoplasm. The enzyme catalyses 1-(5-phospho-beta-D-ribosyl)-ATP + diphosphate = 5-phospho-alpha-D-ribose 1-diphosphate + ATP. It functions in the pathway amino-acid biosynthesis; L-histidine biosynthesis; L-histidine from 5-phospho-alpha-D-ribose 1-diphosphate: step 1/9. Feedback inhibited by histidine. In terms of biological role, catalyzes the condensation of ATP and 5-phosphoribose 1-diphosphate to form N'-(5'-phosphoribosyl)-ATP (PR-ATP). Has a crucial role in the pathway because the rate of histidine biosynthesis seems to be controlled primarily by regulation of HisG enzymatic activity. This Rhodopirellula baltica (strain DSM 10527 / NCIMB 13988 / SH1) protein is ATP phosphoribosyltransferase.